Reading from the N-terminus, the 500-residue chain is Cytochrome P450 71B37 (500 aa).

The chain crosses the membrane as a helical span at residues 2-22; it reads ATIWFLPLLFLSCLLLAALRL. C440 contacts heme.

The protein belongs to the cytochrome P450 family. The cofactor is heme.

The protein resides in the membrane. The sequence is that of Cytochrome P450 71B37 (CYP71B37) from Arabidopsis thaliana (Mouse-ear cress).